A 540-amino-acid chain; its full sequence is Chaperonin GroEL 2 (540 aa).

Residues 30–33 (TLGP), lysine 51, 87–91 (DGTTT), glycine 415, 479–481 (NAA), and aspartate 495 contribute to the ATP site.

The protein belongs to the chaperonin (HSP60) family. Forms a cylinder of 14 subunits composed of two heptameric rings stacked back-to-back. Interacts with the co-chaperonin GroES.

Its subcellular location is the cytoplasm. The enzyme catalyses ATP + H2O + a folded polypeptide = ADP + phosphate + an unfolded polypeptide.. Its function is as follows. Together with its co-chaperonin GroES, plays an essential role in assisting protein folding. The GroEL-GroES system forms a nano-cage that allows encapsulation of the non-native substrate proteins and provides a physical environment optimized to promote and accelerate protein folding. The protein is Chaperonin GroEL 2 of Burkholderia vietnamiensis (strain G4 / LMG 22486) (Burkholderia cepacia (strain R1808)).